The sequence spans 568 residues: Sentrin-specific protease 3 (568 aa).

Positions Met1–Arg119 are disordered. Residues Ser52, Ser71, and Ser73 each carry the phosphoserine modification. A compositionally biased stretch (acidic residues) spans Ala72–Val87. Residues Arg106–Arg119 are compositionally biased toward basic residues. 2 consecutive short sequence motifs (nuclear localization signal) follow at residues Arg119 to Arg122 and Arg147 to Arg153. Residues Leu155–Pro174 are disordered. Position 163 is a phosphoserine (Ser163). Thr170 is modified (phosphothreonine). 4 positions are modified to phosphoserine: Ser175, Ser182, Ser206, and Ser226. The protease stretch occupies residues His380–Leu537. Residues His459 and Asp476 contribute to the active site. The active-site Nucleophile is the Cys526.

Belongs to the peptidase C48 family. Component of some MLL1/MLL complex, at least composed of the core components KMT2A/MLL1, ASH2L, HCFC1/HCF1, WDR5 and RBBP5, as well as the facultative components BACC1, CHD8, E2F6, HSP70, INO80C, KANSL1, LAS1L, MAX, MCRS1, MGA, MYST1/MOF, PELP1, PHF20, PRP31, RING2, RUVB1/TIP49A, RUVB2/TIP49B, SENP3, TAF1, TAF4, TAF6, TAF7, TAF9 and TEX10. Interacts with EP300, NPM1 and CDCA8. Component of the 5FMC complex, at least composed of PELP1, LAS1L, TEX10, WDR18 and SENP3; the complex interacts with methylated CHTOP and ZNF148. Interacts with NOL9. Interacts with CCAR2.

The protein resides in the nucleus. It is found in the nucleolus. It localises to the nucleoplasm. The protein localises to the cytoplasm. With respect to regulation, on oxidative stress, SENP3 degradation is blocked by inhibition of its ubiquitination, which stabilizes it as it accumulates in the nucleoplasm. In terms of biological role, protease that releases SUMO2 and SUMO3 monomers from sumoylated substrates, but has only weak activity against SUMO1 conjugates. Deconjugates SUMO2 from MEF2D, which increases its transcriptional activation capability. Deconjugates SUMO2 and SUMO3 from CDCA8. Redox sensor that, when redistributed into nucleoplasm, can act as an effector to enhance HIF1A transcriptional activity by desumoylating EP300. Required for rRNA processing through deconjugation of SUMO2 and SUMO3 from nucleophosmin, NPM1. Plays a role in the regulation of sumoylation status of ZNF148. Functions as a component of the Five Friends of Methylated CHTOP (5FMC) complex; the 5FMC complex is recruited to ZNF148 by methylated CHTOP, leading to desumoylation of ZNF148 and subsequent transactivation of ZNF148 target genes. Deconjugates SUMO2 from KAT5. Catalyzes desumoylation of MRE11. The sequence is that of Sentrin-specific protease 3 (Senp3) from Mus musculus (Mouse).